The sequence spans 138 residues: Small ribosomal subunit protein uS11c (138 aa).

The disordered stretch occupies residues 1-22; sequence MAKPIPKIGSRKNARSGSRKHL. The span at 9–22 shows a compositional bias: basic residues; that stretch reads GSRKNARSGSRKHL.

It belongs to the universal ribosomal protein uS11 family. As to quaternary structure, part of the 30S ribosomal subunit.

The protein localises to the plastid. It is found in the chloroplast. In Lotus japonicus (Lotus corniculatus var. japonicus), this protein is Small ribosomal subunit protein uS11c.